The chain runs to 148 residues: uncharacterized protein (148 aa).

An N-acetyltransferase domain is found at Met-1–Ser-144.

This is an uncharacterized protein from Bacillus subtilis (strain 168).